The following is a 375-amino-acid chain: tRNA-specific 2-thiouridylase MnmA (375 aa).

Residues 12–19 and Met-38 contribute to the ATP site; that span reads GMSGGVDS. Positions 98 to 100 are interaction with target base in tRNA; that stretch reads NPD. Cys-103 acts as the Nucleophile in catalysis. A disulfide bond links Cys-103 and Cys-200. Residue Gly-127 participates in ATP binding. An interaction with tRNA region spans residues 150–152; the sequence is KDQ. Cys-200 functions as the Cysteine persulfide intermediate in the catalytic mechanism. The interaction with tRNA stretch occupies residues 312–313; sequence RY.

This sequence belongs to the MnmA/TRMU family.

It localises to the cytoplasm. The enzyme catalyses S-sulfanyl-L-cysteinyl-[protein] + uridine(34) in tRNA + AH2 + ATP = 2-thiouridine(34) in tRNA + L-cysteinyl-[protein] + A + AMP + diphosphate + H(+). Functionally, catalyzes the 2-thiolation of uridine at the wobble position (U34) of tRNA, leading to the formation of s(2)U34. The chain is tRNA-specific 2-thiouridylase MnmA from Lactobacillus gasseri (strain ATCC 33323 / DSM 20243 / BCRC 14619 / CIP 102991 / JCM 1131 / KCTC 3163 / NCIMB 11718 / NCTC 13722 / AM63).